A 122-amino-acid chain; its full sequence is Large ribosomal subunit protein uL14 (122 aa).

It belongs to the universal ribosomal protein uL14 family. In terms of assembly, part of the 50S ribosomal subunit. Forms a cluster with proteins L3 and L19. In the 70S ribosome, L14 and L19 interact and together make contacts with the 16S rRNA in bridges B5 and B8.

Binds to 23S rRNA. Forms part of two intersubunit bridges in the 70S ribosome. This is Large ribosomal subunit protein uL14 from Moorella thermoacetica (strain ATCC 39073 / JCM 9320).